A 485-amino-acid chain; its full sequence is Aspartyl/glutamyl-tRNA(Asn/Gln) amidotransferase subunit B (485 aa).

It belongs to the GatB/GatE family. GatB subfamily. Heterotrimer of A, B and C subunits.

It carries out the reaction L-glutamyl-tRNA(Gln) + L-glutamine + ATP + H2O = L-glutaminyl-tRNA(Gln) + L-glutamate + ADP + phosphate + H(+). The enzyme catalyses L-aspartyl-tRNA(Asn) + L-glutamine + ATP + H2O = L-asparaginyl-tRNA(Asn) + L-glutamate + ADP + phosphate + 2 H(+). Its function is as follows. Allows the formation of correctly charged Asn-tRNA(Asn) or Gln-tRNA(Gln) through the transamidation of misacylated Asp-tRNA(Asn) or Glu-tRNA(Gln) in organisms which lack either or both of asparaginyl-tRNA or glutaminyl-tRNA synthetases. The reaction takes place in the presence of glutamine and ATP through an activated phospho-Asp-tRNA(Asn) or phospho-Glu-tRNA(Gln). This chain is Aspartyl/glutamyl-tRNA(Asn/Gln) amidotransferase subunit B, found in Gluconobacter oxydans (strain 621H) (Gluconobacter suboxydans).